A 2235-amino-acid chain; its full sequence is Mediator of RNA polymerase II transcription subunit 12 (2235 aa).

The segment covering 16-35 (SAIGGASARDSGRADSSSIG) has biased composition (low complexity). 6 disordered regions span residues 16–80 (SAIG…EENL), 268–293 (FPAQ…SPAS), 835–858 (SVKR…GCED), 1900–1959 (SSVT…SPAA), 2134–2160 (GSTA…AQGK), and 2183–2202 (WTLL…ASNS). Over residues 280 to 293 (MLYTGSMQKNSPAS) the composition is skewed to polar residues. A compositionally biased stretch (polar residues) spans 1900 to 1916 (SSVTNRSTTSNKQMGTA). The span at 1917 to 1927 (SSGSEISSNKG) shows a compositional bias: low complexity. Polar residues predominate over residues 2134 to 2155 (GSTAAAGTNQRNSPAISKSGTA). Low complexity predominate over residues 2191–2202 (SSGLSSSNASNS).

This sequence belongs to the Mediator complex subunit 12 family. Component of the Mediator complex. As to expression, ubiquitous. Higher expression in vascular tissue, shoot apex and developing floral organs.

The protein localises to the nucleus. In terms of biological role, component of the Mediator complex, a coactivator involved in the regulated transcription of nearly all RNA polymerase II-dependent genes. Mediator functions as a bridge to convey information from gene-specific regulatory proteins to the basal RNA polymerase II transcription machinery. The Mediator complex, having a compact conformation in its free form, is recruited to promoters by direct interactions with regulatory proteins and serves for the assembly of a functional preinitiation complex with RNA polymerase II and the general transcription factors. Flowering regulator which suppresses FLC expression, promotes FT and TSF expression and up-regulates SOC1 and FUL mainly in an FT-dependent manner under long-day conditions. Involved in diverse developmental aspects through gene regulation and modulation of the auxin response. Acts closely together with MAB13. Involved in the regulation of embryo patterning and cotyledon organogenesis by transiently repressing a transcriptional program that interferes with this process. The sequence is that of Mediator of RNA polymerase II transcription subunit 12 (MED12) from Arabidopsis thaliana (Mouse-ear cress).